Reading from the N-terminus, the 377-residue chain is Chaperone protein DnaJ (377 aa).

The 66-residue stretch at 4 to 69 folds into the J domain; sequence DYYEALGVTR…QKRAAYDRFG (66 aa). Residues 135–213 form a CR-type zinc finger; it reads GKTAQIRVPT…CHGQGRVTQE (79 aa). Residues Cys148, Cys151, Cys165, Cys168, Cys187, Cys190, Cys201, and Cys204 each coordinate Zn(2+). 4 CXXCXGXG motif repeats span residues 148-155, 165-172, 187-194, and 201-208; these read CDECSGSG, CTMCSGSG, CPGCNGRG, and CEKCHGQG.

It belongs to the DnaJ family. As to quaternary structure, homodimer. Requires Zn(2+) as cofactor.

It is found in the cytoplasm. Functionally, participates actively in the response to hyperosmotic and heat shock by preventing the aggregation of stress-denatured proteins and by disaggregating proteins, also in an autonomous, DnaK-independent fashion. Unfolded proteins bind initially to DnaJ; upon interaction with the DnaJ-bound protein, DnaK hydrolyzes its bound ATP, resulting in the formation of a stable complex. GrpE releases ADP from DnaK; ATP binding to DnaK triggers the release of the substrate protein, thus completing the reaction cycle. Several rounds of ATP-dependent interactions between DnaJ, DnaK and GrpE are required for fully efficient folding. Also involved, together with DnaK and GrpE, in the DNA replication of plasmids through activation of initiation proteins. This Brucella canis (strain ATCC 23365 / NCTC 10854 / RM-666) protein is Chaperone protein DnaJ.